A 492-amino-acid chain; its full sequence is 2,3-bisphosphoglycerate-independent phosphoglycerate mutase (492 aa).

The Mn(2+) site is built by D11 and S61. The active-site Phosphoserine intermediate is the S61. Residues H118, 147–148, R178, R184, 248–251, and K320 contribute to the substrate site; these read RD and RNDR. Residues D386, H390, D427, H428, and H445 each contribute to the Mn(2+) site.

The protein belongs to the BPG-independent phosphoglycerate mutase family. As to quaternary structure, monomer. The cofactor is Mn(2+).

The enzyme catalyses (2R)-2-phosphoglycerate = (2R)-3-phosphoglycerate. It participates in carbohydrate degradation; glycolysis; pyruvate from D-glyceraldehyde 3-phosphate: step 3/5. In terms of biological role, catalyzes the interconversion of 2-phosphoglycerate and 3-phosphoglycerate. This Campylobacter jejuni subsp. jejuni serotype O:2 (strain ATCC 700819 / NCTC 11168) protein is 2,3-bisphosphoglycerate-independent phosphoglycerate mutase.